We begin with the raw amino-acid sequence, 85 residues long: Putative membrane protein insertion efficiency factor (85 aa).

It belongs to the UPF0161 family.

It localises to the cell inner membrane. Its function is as follows. Could be involved in insertion of integral membrane proteins into the membrane. The protein is Putative membrane protein insertion efficiency factor of Vibrio atlanticus (strain LGP32) (Vibrio splendidus (strain Mel32)).